Reading from the N-terminus, the 1383-residue chain is DNA-directed RNA polymerase subunit beta (1383 aa).

The protein belongs to the RNA polymerase beta chain family. The RNAP catalytic core consists of 2 alpha, 1 beta, 1 beta' and 1 omega subunit. When a sigma factor is associated with the core the holoenzyme is formed, which can initiate transcription.

It catalyses the reaction RNA(n) + a ribonucleoside 5'-triphosphate = RNA(n+1) + diphosphate. In terms of biological role, DNA-dependent RNA polymerase catalyzes the transcription of DNA into RNA using the four ribonucleoside triphosphates as substrates. In Xanthomonas oryzae pv. oryzae (strain MAFF 311018), this protein is DNA-directed RNA polymerase subunit beta.